The following is a 459-amino-acid chain: Glycerol-3-phosphate acyltransferase, chloroplastic (459 aa).

The transit peptide at 1–90 (MTLTFSSSAA…FNEAAGETPS (90 aa)) directs the protein to the chloroplast. Positions 229 to 234 (HQSEAD) match the HXXXXD motif motif.

It belongs to the GPAT/DAPAT family.

It is found in the plastid. The protein resides in the chloroplast stroma. It catalyses the reaction sn-glycerol 3-phosphate + an acyl-CoA = a 1-acyl-sn-glycero-3-phosphate + CoA. It functions in the pathway phospholipid metabolism; CDP-diacylglycerol biosynthesis; CDP-diacylglycerol from sn-glycerol 3-phosphate: step 1/3. In terms of biological role, esterifies acyl-group from acyl-ACP to the sn-1 position of glycerol-3-phosphate. The enzyme from chilling-resistant plants discriminates against non-fluid palmitic acid and selects oleic acid whereas the enzyme from sensitive plants accepts both fatty acids. This is an oleate-selective acyltransferase. The protein is Glycerol-3-phosphate acyltransferase, chloroplastic (ATS1) of Arabidopsis thaliana (Mouse-ear cress).